The chain runs to 341 residues: Pre-mRNA-processing protein 45 (341 aa).

Disordered regions lie at residues Met1–Ser31, Asn181–Ala226, and Glu302–Tyr341. The span at Phe192–Asn201 shows a compositional bias: basic residues. Basic and acidic residues predominate over residues Glu302–Arg318.

The protein belongs to the SNW family. In terms of assembly, associated with the spliceosome.

Its subcellular location is the nucleus. Functionally, involved in pre-mRNA splicing. The chain is Pre-mRNA-processing protein 45 (PRP45) from Debaryomyces hansenii (strain ATCC 36239 / CBS 767 / BCRC 21394 / JCM 1990 / NBRC 0083 / IGC 2968) (Yeast).